The sequence spans 320 residues: Apolipoprotein E (320 aa).

Residues 1–18 (MKVLWAAFLVAFLAGCQG) form the signal peptide. Repeat copies occupy residues 82–103 (ALMD…EQLS), 104–125 (PVAE…ARLG), 126–147 (ADME…AMLG), 148–169 (QSTD…KRLL), 170–191 (RDVD…EGAE), 192–213 (RGVS…ARAA), 214–236 (TVGS…ERLR), and 237–258 (ARME…EQVE). The segment at 82–199 (ALMDETMKEL…AERGVSAIRE (118 aa)) is 8 X 22 AA approximate tandem repeats. Met145 carries the post-translational modification Methionine sulfoxide. At Ser149 the chain carries Phosphoserine. The interval 160–170 (HLRKLRKRLLR) is LDL and other lipoprotein receptors binding. 164–167 (LRKR) serves as a coordination point for heparin. Residues 212-293 (AATVGSSLAS…SWFEPLVEDM (82 aa)) are lipid-binding and lipoprotein association. Residue 232-239 (GERLRARM) coordinates heparin. Residues 269–320 (QQMRLQAEAFQARLKSWFEPLVEDMQRQWAGLVEKVQAAVGASATPVPSDNH) are homooligomerization. A specificity for association with VLDL region spans residues 281 to 293 (RLKSWFEPLVEDM).

The protein belongs to the apolipoprotein A1/A4/E family. As to quaternary structure, homotetramer. May interact with ABCA1; functionally associated with ABCA1 in the biogenesis of HDLs. May interact with APP/A4 amyloid-beta peptide; the interaction is extremely stable in vitro but its physiological significance is unclear. May interact with MAPT. May interact with MAP2. In the cerebrospinal fluid, interacts with secreted SORL1. Interacts with PMEL; this allows the loading of PMEL luminal fragment on ILVs to induce fibril nucleation. Post-translationally, APOE exists as multiple glycosylated and sialylated glycoforms within cells and in plasma. The extent of glycosylation and sialylation are tissue and context specific. Glycated in plasma VLDL. In terms of processing, phosphorylated by FAM20C in the extracellular medium.

The protein resides in the secreted. It localises to the extracellular space. It is found in the extracellular matrix. Its subcellular location is the extracellular vesicle. The protein localises to the endosome. The protein resides in the multivesicular body. Functionally, APOE is an apolipoprotein, a protein associating with lipid particles, that mainly functions in lipoprotein-mediated lipid transport between organs via the plasma and interstitial fluids. APOE is a core component of plasma lipoproteins and is involved in their production, conversion and clearance. Apolipoproteins are amphipathic molecules that interact both with lipids of the lipoprotein particle core and the aqueous environment of the plasma. As such, APOE associates with chylomicrons, chylomicron remnants, very low density lipoproteins (VLDL) and intermediate density lipoproteins (IDL) but shows a preferential binding to high-density lipoproteins (HDL). It also binds a wide range of cellular receptors including the LDL receptor/LDLR, the LDL receptor-related proteins LRP1, LRP2 and LRP8 and the very low-density lipoprotein receptor/VLDLR that mediate the cellular uptake of the APOE-containing lipoprotein particles. Finally, APOE also has a heparin-binding activity and binds heparan-sulfate proteoglycans on the surface of cells, a property that supports the capture and the receptor-mediated uptake of APOE-containing lipoproteins by cells. A main function of APOE is to mediate lipoprotein clearance through the uptake of chylomicrons, VLDLs, and HDLs by hepatocytes. APOE is also involved in the biosynthesis by the liver of VLDLs as well as their uptake by peripheral tissues ensuring the delivery of triglycerides and energy storage in muscle, heart and adipose tissues. By participating in the lipoprotein-mediated distribution of lipids among tissues, APOE plays a critical role in plasma and tissues lipid homeostasis. APOE is also involved in two steps of reverse cholesterol transport, the HDLs-mediated transport of cholesterol from peripheral tissues to the liver, and thereby plays an important role in cholesterol homeostasis. First, it is functionally associated with ABCA1 in the biogenesis of HDLs in tissues. Second, it is enriched in circulating HDLs and mediates their uptake by hepatocytes. APOE also plays an important role in lipid transport in the central nervous system, regulating neuron survival and sprouting. The sequence is that of Apolipoprotein E (APOE) from Saimiri boliviensis boliviensis (Bolivian squirrel monkey).